Reading from the N-terminus, the 370-residue chain is Protein-tyrosine sulfotransferase 1 (370 aa).

Residues 1-8 lie on the Cytoplasmic side of the membrane; it reads MVGKLKQN. The chain crosses the membrane as a helical; Signal-anchor for type II membrane protein span at residues 9–25; it reads LLLACLVISSVTVFYLG. The Lumenal segment spans residues 26–370; it reads QHAMECHHRI…KEKPQTEQVE (345 aa). N-linked (GlcNAc...) asparagine glycosylation is present at Asn-60. 79 to 83 provides a ligand contact to 3'-phosphoadenylyl sulfate; the sequence is RSGTT. A disulfide bridge connects residues Cys-97 and Cys-157. The active-site Proton donor/acceptor is the Glu-100. Residues 102–106 are interaction with peptide substrate; the sequence is RVIPR. 3 residues coordinate 3'-phosphoadenylyl sulfate: Arg-184, Ser-192, and Arg-196. Residues Cys-226 and Cys-234 are joined by a disulfide bond. Tyr-239 contacts 3'-phosphoadenylyl sulfate. N-linked (GlcNAc...) asparagine glycosylation occurs at Asn-262. 3'-phosphoadenylyl sulfate is bound by residues 286-295 and Lys-301; that span reads STDQVIKPVN.

Belongs to the protein sulfotransferase family. Homodimer. Can also form heterodimers with TPST2. In terms of processing, N-glycosylated.

The protein localises to the golgi apparatus membrane. The catalysed reaction is L-tyrosyl-[protein] + 3'-phosphoadenylyl sulfate = O-sulfo-L-tyrosine-[protein] + adenosine 3',5'-bisphosphate + H(+). In terms of biological role, catalyzes the O-sulfation of tyrosine residues within acidic motifs of polypeptides, using 3'-phosphoadenylyl sulfate (PAPS) as cosubstrate. The polypeptide is Protein-tyrosine sulfotransferase 1 (Tpst1) (Rattus norvegicus (Rat)).